The primary structure comprises 157 residues: Arginine repressor (157 aa).

This sequence belongs to the ArgR family.

It localises to the cytoplasm. It functions in the pathway amino-acid biosynthesis; L-arginine biosynthesis [regulation]. Functionally, regulates arginine biosynthesis genes. This Bacteroides thetaiotaomicron (strain ATCC 29148 / DSM 2079 / JCM 5827 / CCUG 10774 / NCTC 10582 / VPI-5482 / E50) protein is Arginine repressor.